Here is a 199-residue protein sequence, read N- to C-terminus: NAD(P)H dehydrogenase (quinone) (199 aa).

Positions 4–190 (VLVLYYSAYG…DGARYQGRKI (187 aa)) constitute a Flavodoxin-like domain. FMN contacts are provided by residues 10–15 (SAYGHI) and 78–80 (TRF). Tyrosine 12 contacts NAD(+). Position 98 (tryptophan 98) interacts with substrate. FMN-binding positions include 113–119 (STATQHG) and histidine 134.

This sequence belongs to the WrbA family. Requires FMN as cofactor.

The enzyme catalyses a quinone + NADH + H(+) = a quinol + NAD(+). The catalysed reaction is a quinone + NADPH + H(+) = a quinol + NADP(+). The chain is NAD(P)H dehydrogenase (quinone) from Xanthobacter autotrophicus (strain ATCC BAA-1158 / Py2).